A 648-amino-acid polypeptide reads, in one-letter code: MESIVWLLLLSPALVAGSLHPRIDNGLAKTPQMGWNSYNYYSCSPNEAIVRSNAKALVDLGLADLGYRYVTTDCGWSVADRLPNGTLTWNETLFPSGFPAMGKYLHELGLLFGVYGDSGTKLCGSPPDQVGSLYHEEQDAKTFAEWGADSLKYDNCYSDAATNYPNVNYEPSTSPRPRYEIMSSALARVGRPILFQICEWGIDFPALWAPALGSSWRIGNDIIPEWRSIFRTLNQAVPNTDFAGPGQWADLDMLYVGNGVFSLPEEQTHFSLWAILKSPLTIGAALKDDDTSINQASLEVLKQKDVIGFNQDALGVSASLKRRWSDEGYEVWSGPLSGNRTVVAVINWRDESRDLTLDLPDVGLQYAQVARNIWGKTVVRDVRTSYTAGVAGHGTMLLELQGTIPSGLYPAKIFAKSTDQKTTFESIYAATTSANYELAITFSRPSTETVTITTSSGQTISISGKSGRIALTAGSNTITIQHKTPIESIQITPPTGTYYANTVFNVTGSAKHTTCGSGCSPVGSKIGDLSPNSNAYTSIPATTVGSKYLAIDYINNEVAFSSSWGWGSNSRNLTVSVNDGAPVRLEVPLSGRHSELFSPGKGWWDTATLGVLTSGWKKGENKVVFGNQGGEDGFQTYAADFVGVRILD.

Positions 1 to 17 (MESIVWLLLLSPALVAG) are cleaved as a signal peptide. N-linked (GlcNAc...) asparagine glycans are attached at residues asparagine 84 and asparagine 90. A disulfide bridge links cysteine 123 with cysteine 156. Residue aspartate 154 is the Nucleophile of the active site. A substrate-binding site is contributed by 199-203 (EWGID). Residue aspartate 221 is the Proton donor of the active site. N-linked (GlcNAc...) asparagine glycosylation is found at asparagine 339, asparagine 505, and asparagine 572.

This sequence belongs to the glycosyl hydrolase 27 family.

It is found in the secreted. The enzyme catalyses Hydrolysis of terminal, non-reducing alpha-D-galactose residues in alpha-D-galactosides, including galactose oligosaccharides, galactomannans and galactolipids.. Hydrolyzes a variety of simple alpha-D-galactoside as well as more complex molecules such as oligosaccharides and polysaccharides. This is Probable alpha-galactosidase D (aglD) from Neosartorya fischeri (strain ATCC 1020 / DSM 3700 / CBS 544.65 / FGSC A1164 / JCM 1740 / NRRL 181 / WB 181) (Aspergillus fischerianus).